We begin with the raw amino-acid sequence, 28 residues long: KRGFLDVVKHIGKAALGAVTHLINQGEQ.

Gln-25 is subject to Glutamine amide. A propeptide spanning residues 27-28 is cleaved from the precursor; it reads EQ.

As to expression, expressed by the skin glands.

The protein resides in the secreted. Functionally, has antimicrobial activity against Gram-negative bacterium E.coli (MIC=13.32 uM), against Gram-positive bacterium S.aureus (MIC=13.32 uM) and against fungus C.albicans (MIC=13.32 uM). At higher concentrations also has a bactericidal and fungicidal effect. Has hemagglutinating activity against horse erythrocytes. The sequence is that of Cruzioseptin-3 from Cruziohyla calcarifer (Splendid leaf frog).